A 482-amino-acid chain; its full sequence is MSQNKTLTTASGPPVADNQNSRSAGPRGPLLLDDFHLIEKLAHFNRENIPERRVHAKGSGAYGTFTVTQDITQYTSAKLFDSVGKQTPTFLRFSTVGGERGSADTERDPRGFALKFYTEEGNWDIVGNNTPVFFIRDPLKFPDFIHTQKRLPQSNLKSAQMMWDFWSHSPEALHQVTILFSDRGIPDGYRHMHGFGSHTYSLINAKGERHWVKWHYKTKQGIKNLAPADAARLAGTDPDYAQRDLFGAIERGDFPKWRVCIQIMTEAQANAHYENPFDVTKTWSQKEFPLIEVGELELNRNPLNYFAEVEQAAFGPSNMVPGVGLSPDRMLQGRVFAYADAHRYRVGTNHQQLPVNAPRSPVNSYQRDGSMAFGSNGGAAPNYEPNSYADAPKQAPQYAEPALALSGAADRYDHREDTDYYSHAGALFRLMNDEQKALLINNIAGAMAGVSSDVVQRQLQYFFKADPAYGEGIASALGVSLN.

The span at M1–S23 shows a compositional bias: polar residues. A disordered region spans residues M1–G28. Active-site residues include H55 and N128. Y338 contributes to the heme binding site. The disordered stretch occupies residues S370–A395.

The protein belongs to the catalase family. Requires heme as cofactor.

The enzyme catalyses 2 H2O2 = O2 + 2 H2O. Functionally, decomposes hydrogen peroxide into water and oxygen; serves to protect cells from the toxic effects of hydrogen peroxide. This chain is Catalase (cat), found in Onchocerca volvulus endobacterium.